The following is a 716-amino-acid chain: Beta-1,2-glucosyltransferase (716 aa).

Residues tyrosine 52, isoleucine 99, alanine 101, glutamate 102, asparagine 175, glutamate 176, glycine 278, tryptophan 279, glutamate 343, and arginine 349 each contribute to the sophorose site. Catalysis depends on glutamate 176, which acts as the Proton donor/acceptor. Glutamate 176, glycine 278, and tryptophan 279 together coordinate beta-D-glucose. Glutamate 343 serves as the catalytic Nucleophile. Beta-D-glucose is bound by residues arginine 349, lysine 358, and glutamate 361. Position 378 (tyrosine 378) interacts with sophorose. The beta-D-glucose site is built by serine 708 and tyrosine 709.

The protein belongs to the glycosyl hydrolase 35 family. Homidimer.

The protein localises to the cytoplasm. The enzyme catalyses a D-glucoside + [(1-&gt;2)-beta-D-glucosyl](n) = a beta-D-glucosyl-(1-&gt;2)-D-glucoside + [(1-&gt;2)-beta-D-glucosyl](n-1). Functionally, glycosyltransferase acting on beta-1,2-glucooligosaccharides. Catalyzes the transfer of a glucosyl residue from the non-reducing end of a 1,2-beta-D-glucan to a glucose residue of an acceptor molecule, forming a beta-1,2-glucosidic bond. The beta-1,2-linked glucose dimer sophorose is the preferred donor in vitro. Has a very broad specificity for the acceptor and can act on various aryl- and alkyl-glucosides. Does not show any hydrolytic activity. In Ignavibacterium album (strain DSM 19864 / JCM 16511 / NBRC 101810 / Mat9-16), this protein is Beta-1,2-glucosyltransferase.